A 481-amino-acid polypeptide reads, in one-letter code: Glutamyl-tRNA(Gln) amidotransferase subunit A (481 aa).

Residues lysine 76 and serine 151 each act as charge relay system in the active site. The active-site Acyl-ester intermediate is serine 175.

It belongs to the amidase family. GatA subfamily. In terms of assembly, heterotrimer of A, B and C subunits.

The enzyme catalyses L-glutamyl-tRNA(Gln) + L-glutamine + ATP + H2O = L-glutaminyl-tRNA(Gln) + L-glutamate + ADP + phosphate + H(+). Its function is as follows. Allows the formation of correctly charged Gln-tRNA(Gln) through the transamidation of misacylated Glu-tRNA(Gln) in organisms which lack glutaminyl-tRNA synthetase. The reaction takes place in the presence of glutamine and ATP through an activated gamma-phospho-Glu-tRNA(Gln). This chain is Glutamyl-tRNA(Gln) amidotransferase subunit A, found in Neisseria meningitidis serogroup C (strain 053442).